The chain runs to 371 residues: Polygalacturonase (371 aa).

Positions 1 to 19 are cleaved as a signal peptide; that stretch reads MPSYLRNLVWATLAAGLVS. Positions 20–34 are excised as a propeptide; the sequence is AAPTPSRVSDLTKKS. Cys-38 and Cys-53 are joined by a disulfide. 7 PbH1 repeats span residues 95-117, 165-195, 196-217, 218-238, 247-268, 276-298, and 310-355; these read GPLIKISGSDITVEAADGAVINA, SDNLIIDGVTIDNSDGDENGGHNTDGFDISE, STGVTIRNAVVKNQDDCIAINS, GQNIYFTGGTCSGGHGLSIGS, VKNVTITDSTVTDSANGVRIKT, VSDVTFSDITVSGITDYGIVIEQ, and TSGV…DITS. The Proton donor role is filled by Asp-210. Cys-212 and Cys-228 form a disulfide bridge. His-232 is a catalytic residue. An N-linked (GlcNAc...) asparagine glycan is attached at Asn-249. Disulfide bonds link Cys-338–Cys-343 and Cys-362–Cys-371.

The protein belongs to the glycosyl hydrolase 28 family.

It is found in the secreted. It carries out the reaction (1,4-alpha-D-galacturonosyl)n+m + H2O = (1,4-alpha-D-galacturonosyl)n + (1,4-alpha-D-galacturonosyl)m.. The sequence is that of Polygalacturonase from Penicillium janthinellum (Penicillium vitale).